We begin with the raw amino-acid sequence, 647 residues long: tRNA 5-methylaminomethyl-2-thiouridine biosynthesis bifunctional protein MnmC (647 aa).

Positions 1–227 are tRNA (mnm(5)s(2)U34)-methyltransferase; that stretch reads MLTWKNNLTP…KREMLIGSYS (227 aa). The interval 256-647 is FAD-dependent cmnm(5)s(2)U34 oxidoreductase; that stretch reads VGAGIAGTTL…ARFLYRKVRK (392 aa).

It in the N-terminal section; belongs to the methyltransferase superfamily. tRNA (mnm(5)s(2)U34)-methyltransferase family. The protein in the C-terminal section; belongs to the DAO family. FAD is required as a cofactor.

It is found in the cytoplasm. It catalyses the reaction 5-aminomethyl-2-thiouridine(34) in tRNA + S-adenosyl-L-methionine = 5-methylaminomethyl-2-thiouridine(34) in tRNA + S-adenosyl-L-homocysteine + H(+). Catalyzes the last two steps in the biosynthesis of 5-methylaminomethyl-2-thiouridine (mnm(5)s(2)U) at the wobble position (U34) in tRNA. Catalyzes the FAD-dependent demodification of cmnm(5)s(2)U34 to nm(5)s(2)U34, followed by the transfer of a methyl group from S-adenosyl-L-methionine to nm(5)s(2)U34, to form mnm(5)s(2)U34. The polypeptide is tRNA 5-methylaminomethyl-2-thiouridine biosynthesis bifunctional protein MnmC (Leptospira interrogans serogroup Icterohaemorrhagiae serovar Lai (strain 56601)).